We begin with the raw amino-acid sequence, 193 residues long: ATP-dependent protease subunit HslV (193 aa).

Thr-12 is an active-site residue. Ala-167, Cys-170, and Thr-173 together coordinate Na(+).

The protein belongs to the peptidase T1B family. HslV subfamily. In terms of assembly, a double ring-shaped homohexamer of HslV is capped on each side by a ring-shaped HslU homohexamer. The assembly of the HslU/HslV complex is dependent on binding of ATP.

The protein localises to the cytoplasm. It carries out the reaction ATP-dependent cleavage of peptide bonds with broad specificity.. Its activity is regulated as follows. Allosterically activated by HslU binding. Functionally, protease subunit of a proteasome-like degradation complex believed to be a general protein degrading machinery. The protein is ATP-dependent protease subunit HslV of Bartonella quintana (strain Toulouse) (Rochalimaea quintana).